Here is a 146-residue protein sequence, read N- to C-terminus: BCL7-like protein (146 aa).

The tract at residues 59–146 is disordered; the sequence is MAPPKIKEVK…RDAEMTSKQP (88 aa). Polar residues-rich tracts occupy residues 75 to 90 and 113 to 134; these read NQVP…TSVT and DSNQ…TDFS. Basic and acidic residues predominate over residues 135-146; sequence SMRDAEMTSKQP.

The protein belongs to the BCL7 family. As to expression, ubiquitous.

The protein resides in the nucleus. In terms of biological role, required for the terminal differentiation of seam cells, and the differentiation of distal tip cells important for normal somatic gonad and germ cell development. Plays a role in the Wnt signaling pathway, regulating the expression of beta-catenin homologs wrm-1, bar-1 and sys-1, and the localization of wrm-1 and the wnt signaling pathway component pop-1 during asymmetric cell division of seam cells and the Z-cell lineage of the somatic gonad, respectively. May have a pro-apoptotic role, possibly linked to the negative regulation of expression of anti-apoptotic factor ced-9. The protein is BCL7-like protein of Caenorhabditis elegans.